A 289-amino-acid chain; its full sequence is MFGLFGLWRTFDSVVFYLTLIVGLGGPVGNGLVLWNLGFRIKKGPFSIYLLHLAAADFLFLSCRVGFSVAQAALGAQDTLYFVLTFLWFAVGLWLLAAFSVERCLSDLFPACYQGCRPRHASAVLCALVWTPTLPAVPLPANACGLLRNSACPLVCPRYHVASVTWFLVLARVAWTAGVVLFVWVTCCSTRPRPRLYGIVLGALLLLFFCGLPSVFYWSLQPLLNFLLPVFSPLATLLACVNSSSKPLIYSGLGRQPGKREPLRSVLRRALGEGAELGARGQSLPMGLL.

The Extracellular segment spans residues 1 to 13; that stretch reads MFGLFGLWRTFDS. A helical membrane pass occupies residues 14-34; it reads VVFYLTLIVGLGGPVGNGLVL. Topologically, residues 35–42 are cytoplasmic; it reads WNLGFRIK. The helical transmembrane segment at 43–63 threads the bilayer; that stretch reads KGPFSIYLLHLAAADFLFLSC. Over 64 to 78 the chain is Extracellular; it reads RVGFSVAQAALGAQD. The chain crosses the membrane as a helical span at residues 79–99; sequence TLYFVLTFLWFAVGLWLLAAF. Residues 100–120 lie on the Cytoplasmic side of the membrane; sequence SVERCLSDLFPACYQGCRPRH. The helical transmembrane segment at 121 to 141 threads the bilayer; the sequence is ASAVLCALVWTPTLPAVPLPA. Residues 142–163 are Extracellular-facing; that stretch reads NACGLLRNSACPLVCPRYHVAS. A helical transmembrane segment spans residues 164–184; that stretch reads VTWFLVLARVAWTAGVVLFVW. The Cytoplasmic portion of the chain corresponds to 185-195; the sequence is VTCCSTRPRPR. A helical transmembrane segment spans residues 196-216; sequence LYGIVLGALLLLFFCGLPSVF. Residues 217 to 221 lie on the Extracellular side of the membrane; that stretch reads YWSLQ. The helical transmembrane segment at 222-242 threads the bilayer; it reads PLLNFLLPVFSPLATLLACVN. The Cytoplasmic portion of the chain corresponds to 243 to 289; the sequence is SSSKPLIYSGLGRQPGKREPLRSVLRRALGEGAELGARGQSLPMGLL.

This sequence belongs to the G-protein coupled receptor 1 family. Mas subfamily.

It is found in the cell membrane. Its function is as follows. Orphan receptor. May regulate nociceptor function and/or development, including the sensation or modulation of pain. In Homo sapiens (Human), this protein is Mas-related G-protein coupled receptor member G (MRGPRG).